Here is a 395-residue protein sequence, read N- to C-terminus: Phosphoglycerate kinase (395 aa).

Residues 21–23, Arg36, 59–62, Arg113, and Arg146 contribute to the substrate site; these read DLN and HLGR. ATP is bound by residues Lys197, Glu324, and 350 to 353; that span reads GGDT.

It belongs to the phosphoglycerate kinase family. As to quaternary structure, monomer.

It localises to the cytoplasm. It catalyses the reaction (2R)-3-phosphoglycerate + ATP = (2R)-3-phospho-glyceroyl phosphate + ADP. Its pathway is carbohydrate degradation; glycolysis; pyruvate from D-glyceraldehyde 3-phosphate: step 2/5. This chain is Phosphoglycerate kinase, found in Acinetobacter baumannii (strain ATCC 17978 / DSM 105126 / CIP 53.77 / LMG 1025 / NCDC KC755 / 5377).